The chain runs to 557 residues: Fanconi anemia group C protein homolog (557 aa).

As to quaternary structure, belongs to the multisubunit FA complex composed of FANCA, FANCB, FANCC, FANCE, FANCF, FANCG, FANCL/PHF9 and FANCM. This complex may also include HSP70. Interacts with ZBTB32. Upon IFNG induction, interacts with STAT1. Interacts with CDK1. Interacts with EIF2AK2.

Its subcellular location is the nucleus. The protein localises to the cytoplasm. In terms of biological role, DNA repair protein that may operate in a postreplication repair or a cell cycle checkpoint function. May be implicated in interstrand DNA cross-link repair and in the maintenance of normal chromosome stability. Upon IFNG induction, may facilitate STAT1 activation by recruiting STAT1 to IFNGR1. The polypeptide is Fanconi anemia group C protein homolog (Fancc) (Rattus norvegicus (Rat)).